The sequence spans 317 residues: Protease HtpX homolog (317 aa).

A run of 2 helical transmembrane segments spans residues 6-26 (TAIL…AIGG) and 28-48 (GGMM…YWNS). H130 provides a ligand contact to Zn(2+). E131 is a catalytic residue. H134 contacts Zn(2+). The next 2 helical transmembrane spans lie at 145–165 (MTAT…LFGG) and 173–193 (PFGA…AMLV). Position 202 (E202) interacts with Zn(2+). Positions 283–317 (GGGGFAPGPAPAVRPPGGNPWGVDPGGGQRRGPWG) are disordered. Positions 290–300 (GPAPAVRPPGG) are enriched in pro residues. The span at 306-317 (DPGGGQRRGPWG) shows a compositional bias: gly residues.

The protein belongs to the peptidase M48B family. The cofactor is Zn(2+).

The protein localises to the cell inner membrane. This is Protease HtpX homolog from Xanthobacter autotrophicus (strain ATCC BAA-1158 / Py2).